A 316-amino-acid chain; its full sequence is Cobalamin biosynthesis protein CobD (316 aa).

Transmembrane regions (helical) follow at residues 45 to 65 (FSPY…ALGV), 78 to 100 (PVLY…SLAF), 151 to 171 (DGVI…AMTY), 209 to 229 (LTWL…KGAL), and 291 to 311 (ISLL…FYLV).

Belongs to the CobD/CbiB family.

The protein resides in the cell membrane. It functions in the pathway cofactor biosynthesis; adenosylcobalamin biosynthesis. Functionally, converts cobyric acid to cobinamide by the addition of aminopropanol on the F carboxylic group. In Streptococcus sanguinis (strain SK36), this protein is Cobalamin biosynthesis protein CobD.